The following is a 348-amino-acid chain: Inactive rhomboid-related protein 2 (348 aa).

Residues 14 to 49 enclose the EF-hand domain; that stretch reads IEASSWIRIFRAFDTDHDGLIQCEEMQKTIRDSTYS. Ca(2+) is bound by residues aspartate 27, aspartate 29, aspartate 31, and glutamate 38. Helical transmembrane passes span 121 to 141, 177 to 197, 207 to 227, 229 to 249, 263 to 283, 290 to 310, and 323 to 343; these read PPIF…YYVV, LINV…AIGV, IYIL…ALDP, VFLC…ITTI, LPIL…QRFF, VSMY…FILF, and FWVS…LIAA.

It belongs to the peptidase S54 family.

It is found in the membrane. Functionally, probable inactive serine protease. This chain is Inactive rhomboid-related protein 2, found in Caenorhabditis elegans.